Here is a 231-residue protein sequence, read N- to C-terminus: 6-hydroxymethyl-7,8-dihydropterin pyrophosphokinase (231 aa).

Belongs to the archaeal 6-HMPDK family. Mg(2+) serves as cofactor.

The enzyme catalyses 6-hydroxymethyl-7,8-dihydropterin + ATP = (7,8-dihydropterin-6-yl)methyl diphosphate + AMP + H(+). In terms of biological role, catalyzes the transfer of diphosphate from ATP to 6-hydroxymethyl-7,8-dihydropterin (6-HMD), leading to 6-hydroxymethyl-7,8-dihydropterin diphosphate (6-HMDP). To a lesser extent, can also use CTP, UTP, and GTP as the nucleotide triphosphate substrate. The polypeptide is 6-hydroxymethyl-7,8-dihydropterin pyrophosphokinase (Pyrococcus furiosus (strain ATCC 43587 / DSM 3638 / JCM 8422 / Vc1)).